A 1272-amino-acid chain; its full sequence is Regulator of nonsense transcripts 2 (1272 aa).

Positions 1–114 (MPAERKKPAS…QEEQAKRQQE (114 aa)) are enriched in basic and acidic residues. 4 disordered regions span residues 1–126 (MPAE…EKEE), 370–389 (DHRE…HSKG), 423–445 (NMPD…DIFT), and 490–517 (CQNK…SPDD). The stretch at 54–134 (EDKKKRLEDD…EESIQLHQEA (81 aa)) forms a coiled coil. Residues 94–133 (KKKHQEEERKKQEEQAKRQQEEEAAAQMKEKEESIQLHQE) are sufficient for interaction with UPF1. The region spanning 168–431 (LKKNTAFVKK…ENMPDLPQDK (264 aa)) is the MIF4G 1 domain. Composition is skewed to basic and acidic residues over residues 428–439 (PQDKPTPEEHGP) and 490–513 (CQNK…KEVS). Residues 487 to 559 (EKSCQNKESN…EQEQEDEEAS (73 aa)) are a coiled coil. MIF4G domains lie at 569–758 (DAFL…CNPP) and 773–986 (EYVR…LRPK). Residues 711–928 (GRFLFRSPES…IRLVCTILDT (218 aa)) are sufficient for interaction with UPF3A and UPF3B. The interval 757 to 1272 (PPPAEKTVKK…LIFKTGGRRR (516 aa)) is sufficient for interaction with EIF4A1 and EIF1. The interval 839–859 (EDVGIHVVDGVLEDIRLGMEV) is binds to UPF3B. The segment at 1018–1098 (DSKDSMTEGE…DEENTEVMIK (81 aa)) is disordered. The span at 1027 to 1076 (ENLEEDEEEEEGGAETEEQSGNESEVNEPEEEEGSDNDDDEGEEEEEENT) shows a compositional bias: acidic residues. The interval 1084 to 1272 (KENETDEENT…LIFKTGGRRR (189 aa)) is sufficient for interaction with UPF1 C-terminus. Residue Thr1088 is modified to Phosphothreonine. 2 interaction with UPF1 regions span residues 1105-1129 (VPCV…QQRS) and 1167-1207 (DTMP…AEQE). The interval 1105–1198 (VPCVEDEDFI…PMSSQLAANH (94 aa)) is necessary for interaction with UPF1. Residues 1220-1272 (NERQEQEDYQEMLQSLAQRPAPANTNRERRPRYQHPKGAPNADLIFKTGGRRR) form a disordered region.

As to quaternary structure, found in a post-splicing messenger ribonucleoprotein (mRNP) complex. Associates with the exon junction complex (EJC). Interacts with SMG1, EST1A, UPF1, UPF3A, UPF3B, EIF4A1 and EIF1. As to expression, ubiquitous.

It localises to the cytoplasm. The protein localises to the perinuclear region. Involved in nonsense-mediated decay (NMD) of mRNAs containing premature stop codons by associating with the nuclear exon junction complex (EJC). Recruited by UPF3B associated with the EJC core at the cytoplasmic side of the nuclear envelope and the subsequent formation of an UPF1-UPF2-UPF3 surveillance complex (including UPF1 bound to release factors at the stalled ribosome) is believed to activate NMD. In cooperation with UPF3B stimulates both ATPase and RNA helicase activities of UPF1. Binds spliced mRNA. The polypeptide is Regulator of nonsense transcripts 2 (Homo sapiens (Human)).